The following is a 344-amino-acid chain: RNA 3'-terminal phosphate cyclase (344 aa).

Residues Gln103 and 283–287 (HLADQ) each bind ATP. His308 acts as the Tele-AMP-histidine intermediate in catalysis.

This sequence belongs to the RNA 3'-terminal cyclase family. Type 1 subfamily.

The protein resides in the cytoplasm. It carries out the reaction a 3'-end 3'-phospho-ribonucleotide-RNA + ATP = a 3'-end 2',3'-cyclophospho-ribonucleotide-RNA + AMP + diphosphate. In terms of biological role, catalyzes the conversion of 3'-phosphate to a 2',3'-cyclic phosphodiester at the end of RNA. The mechanism of action of the enzyme occurs in 3 steps: (A) adenylation of the enzyme by ATP; (B) transfer of adenylate to an RNA-N3'P to produce RNA-N3'PP5'A; (C) and attack of the adjacent 2'-hydroxyl on the 3'-phosphorus in the diester linkage to produce the cyclic end product. The biological role of this enzyme is unknown but it is likely to function in some aspects of cellular RNA processing. The polypeptide is RNA 3'-terminal phosphate cyclase (Salmonella agona (strain SL483)).